A 320-amino-acid chain; its full sequence is ATP-dependent 6-phosphofructokinase (320 aa).

ATP-binding positions include Gly-11, 72 to 73 (RY), and 102 to 105 (GDGS). Position 103 (Asp-103) interacts with Mg(2+). Substrate is bound by residues 125–127 (TID), Arg-162, 169–171 (MGR), Glu-222, Arg-243, and 249–252 (HMQR). Asp-127 (proton acceptor) is an active-site residue.

Belongs to the phosphofructokinase type A (PFKA) family. ATP-dependent PFK group I subfamily. Prokaryotic clade 'B1' sub-subfamily. As to quaternary structure, homotetramer. Mg(2+) serves as cofactor.

The protein resides in the cytoplasm. It carries out the reaction beta-D-fructose 6-phosphate + ATP = beta-D-fructose 1,6-bisphosphate + ADP + H(+). It functions in the pathway carbohydrate degradation; glycolysis; D-glyceraldehyde 3-phosphate and glycerone phosphate from D-glucose: step 3/4. Allosterically activated by ADP and other diphosphonucleosides, and allosterically inhibited by phosphoenolpyruvate. In terms of biological role, catalyzes the phosphorylation of D-fructose 6-phosphate to fructose 1,6-bisphosphate by ATP, the first committing step of glycolysis. This is ATP-dependent 6-phosphofructokinase from Lactiplantibacillus plantarum (strain ATCC BAA-793 / NCIMB 8826 / WCFS1) (Lactobacillus plantarum).